The following is a 367-amino-acid chain: GDSL esterase/lipase 3 (367 aa).

An N-terminal signal peptide occupies residues 1–23 (MVRLVLIIFFVYTIILSIGSINC). Serine 42 acts as the Nucleophile in catalysis. Residues asparagine 175, asparagine 194, and asparagine 321 are each glycosylated (N-linked (GlcNAc...) asparagine). Active-site residues include aspartate 329 and histidine 332. Asparagine 351 carries an N-linked (GlcNAc...) asparagine glycan.

It belongs to the 'GDSL' lipolytic enzyme family.

It is found in the secreted. This is GDSL esterase/lipase 3 (GLIP3) from Arabidopsis thaliana (Mouse-ear cress).